We begin with the raw amino-acid sequence, 509 residues long: MEPAGPAPGRLGPLLFCLLLSASCFCAGASGKELKVTQADKSVSVAAGDSATLNCTVSSLTPVGPIKWFKGEGQNRSPIYSFIGGEHFPRITNVSDATKRNNMDFSICISNVTPEDAGTYYCVKFQKGIVEPDTEIKSGGGTTLYVLAKPSSPEVSGPDSRGSPGQTVNFTCKSYGFSPRNITLKWLKDGKELSHLETTISSKSNVSYNISSTVSVKLSPEDIHSRVICEVAHVTLEGRPLNGTANFSNIIRVSPTLKITQQPLTPASQVNLTCQVQKFYPKALQLNWLENGNLSRTDKPEHFTDNRDGTYNYTSLFLVNSSAHREDVVFTCQVEHDSQPAITENHTVRAFAHSSSGGSMETIPDNNAYYNWNVFIGVGVACALLVVLLMAALYLLRIKQKKAKGSTSSTRLHEPEKNAREITQIQDTNDINDITYADLNLPKEKKPAPRVPEPNNHTEYASIETGKLPRPEDTLTYADLDMVHLNRAQPTPKPEPSFSEYASVQVQRK.

An N-terminal signal peptide occupies residues 1 to 31; sequence MEPAGPAPGRLGPLLFCLLLSASCFCAGASG. In terms of domain architecture, Ig-like V-type spans 32–138; sequence KELKVTQADK…IVEPDTEIKS (107 aa). Residues 32–373 are Extracellular-facing; it reads KELKVTQADK…PDNNAYYNWN (342 aa). N-linked (GlcNAc...) asparagine glycosylation is found at N54, N93, N169, N181, N205, N209, N242, N246, N271, N293, N312, N320, and N345. C55 and C122 are joined by a disulfide. 2 consecutive Ig-like C1-type domains span residues 150–248 and 255–349; these read PSSP…ANFS and PTLK…HTVR. C172 and C229 are oxidised to a cystine. A disulfide bridge connects residues C274 and C332. Residues 374–394 traverse the membrane as a helical segment; the sequence is VFIGVGVACALLVVLLMAALY. At 395–509 the chain is on the cytoplasmic side; the sequence is LLRIKQKKAK…EYASVQVQRK (115 aa). At Y436 the chain carries Phosphotyrosine; by Tyr-kinases. An SH2-binding motif is present at residues 436–439; sequence YADL. The disordered stretch occupies residues 441-472; the sequence is LPKEKKPAPRVPEPNNHTEYASIETGKLPRPE. Residues 446–451 carry the SH3-binding motif; that stretch reads KPAPRV. Phosphotyrosine; by Tyr-kinases is present on residues Y460, Y477, and Y501. Short sequence motifs (SH2-binding) lie at residues 460 to 463, 477 to 480, and 501 to 504; these read YASI, YADL, and YASV. The tract at residues 485 to 509 is disordered; it reads LNRAQPTPKPEPSFSEYASVQVQRK. The span at 500-509 shows a compositional bias: polar residues; sequence EYASVQVQRK.

Binds PTPN11 when tyrosine-phosphorylated, except in macrophages, where it primarily binds PTPN6. Binds GRB2 in vitro. Binds FGR. Binds JAK2 irrespective of its phosphorylation status and forms a stable complex. Binds SCAP1 and/or SCAP2. The resulting complex recruits FYB1. Binds PTK2B. Interacts with TRIM2. In terms of processing, N-glycosylated. Post-translationally, phosphorylated on tyrosine residues in response to insulin, cell adhesion or epidermal growth factors. Dephosphorylated by PTPN11. As to expression, highly expressed in brain, spleen, lung, liver and kidney. Detected at lower levels in heart. Highly expressed in alveolar and peritoneal macrophages, and at lower levels in dendritic cells.

The protein localises to the membrane. Its function is as follows. Immunoglobulin-like cell surface receptor for CD47. Acts as docking protein and induces translocation of PTPN6, PTPN11 and other binding partners from the cytosol to the plasma membrane. Supports adhesion of cerebellar neurons, neurite outgrowth and glial cell attachment. May play a key role in intracellular signaling during synaptogenesis and in synaptic function. Involved in the negative regulation of receptor tyrosine kinase-coupled cellular responses induced by cell adhesion, growth factors or insulin. Mediates negative regulation of phagocytosis, mast cell activation and dendritic cell activation. CD47 binding prevents maturation of immature dendritic cells and inhibits cytokine production by mature dendritic cells. Plays a role in antiviral immunity and limits new world arenavirus infection by decreasing virus internalization. Receptor for THBS1. Interaction with THBS1 stimulates phosphorylation of SIRPA. In response to THBS1, involved in ROS signaling in non-phagocytic cells, stimulating NADPH oxidase-derived ROS production. The polypeptide is Tyrosine-protein phosphatase non-receptor type substrate 1 (Sirpa) (Rattus norvegicus (Rat)).